We begin with the raw amino-acid sequence, 132 residues long: Inclusion membrane protein E (132 aa).

2 helical membrane-spanning segments follow: residues 41-61 (LGVVCSIICLALGIAAAAVGV) and 66-86 (FALGLGIIAILLGIVLFATSA).

Its subcellular location is the secreted. It is found in the host vacuole. The protein localises to the host pathogen-containing vacuole. The protein resides in the host pathogen-containing vacuole membrane. Inclusion membrane protein probably involved in early modification events of the chlamydial inclusion. This Chlamydia trachomatis serovar L2 (strain ATCC VR-902B / DSM 19102 / 434/Bu) protein is Inclusion membrane protein E.